The chain runs to 1024 residues: NLR family CARD domain-containing protein 4 (1024 aa).

In terms of domain architecture, CARD spans 1–88; the sequence is MNFIKDNSRA…PLFQDLNGQS (88 aa). The interval 95–298 is nucleotide-binding domain (NBD); it reads EGDLDDLAQD…QFGALTAEVG (204 aa). Residues 163 to 476 form the NACHT domain; sequence SPCIIEGESG…VTKGNGYLQK (314 aa). 169 to 176 contacts ATP; it reads GESGKGKS. Residues 356 to 463 are winged-helix domain (WHD); the sequence is SHTQTTLFHT…RLSSLLTSHE (108 aa). Position 533 is a phosphoserine (serine 533). LRR repeat units lie at residues 578-598, 656-679, 735-758, 762-785, 787-812, 824-847, 848-870, 878-902, 911-933, 936-963, 965-985, and 999-1021; these read FFQG…LFDF, KQEF…DIRY, VTNL…LTDS, LKNL…KLAE, LKNL…DYIV, EIQL…LHNL, VKLS…ALHE, LEQL…LLKH, KLGL…FFGK, LKNF…VFEN, KQLV…ALVR, and EARL…AFKL.

In terms of assembly, homooligomer; homooligomerizes to induce formation of the NLRC4 inflammasome. Homooligomerizes following activation by pathogenic proteins. Component of the NLRC4 inflammasome, at least composed of NLRC4 and caspase-1 (CASP1). Some NLRC4 inflammasomes contain PYCARD/ASC, while some others directly contact and activate CASP1. Interacts (via CARD domain) with PYCARD/ASC, pro-caspase-1 (CASP1), NOD2, BCL10 and NALP1 (NAC) by CARD-CARD interaction. Interacts with EIF2AK2/PKR. In terms of processing, phosphorylated at Ser-533 following infection of macrophages with S.typhimurium (Salmonella). Phosphorylation is essential for NLRC4 inflammasome function to promote caspase-1 activation and pyroptosis. PRKCD phosphorylates Ser-533 in vitro. In terms of tissue distribution, isoform 2 is expressed ubiquitously, although highly expressed in lung and spleen. Isoform 1 is highly expressed in lung, followed by leukocytes especially monocytes, lymph node, colon, brain, prostate, placenta, spleen, bone marrow and fetal liver. Isoform 4 is only detected in brain.

The protein localises to the cytoplasm. It localises to the cytosol. Its subcellular location is the inflammasome. Functionally, key component of inflammasomes that indirectly senses specific proteins from pathogenic bacteria and fungi and responds by assembling an inflammasome complex that promotes caspase-1 activation, cytokine production and macrophage pyroptosis. The NLRC4 inflammasome is activated as part of the innate immune response to a range of intracellular bacteria. In Homo sapiens (Human), this protein is NLR family CARD domain-containing protein 4 (NLRC4).